We begin with the raw amino-acid sequence, 535 residues long: GMP synthase [glutamine-hydrolyzing] (535 aa).

The 194-residue stretch at Lys24–Asp217 folds into the Glutamine amidotransferase type-1 domain. Cys101 functions as the Nucleophile in the catalytic mechanism. Residues His191 and Glu193 contribute to the active site. Positions Trp218–Arg410 constitute a GMPS ATP-PPase domain. ATP is bound at residue Ser245–Ala251.

In terms of assembly, homodimer.

The catalysed reaction is XMP + L-glutamine + ATP + H2O = GMP + L-glutamate + AMP + diphosphate + 2 H(+). It functions in the pathway purine metabolism; GMP biosynthesis; GMP from XMP (L-Gln route): step 1/1. Functionally, catalyzes the synthesis of GMP from XMP. The protein is GMP synthase [glutamine-hydrolyzing] of Rhodopseudomonas palustris (strain BisB18).